Here is a 417-residue protein sequence, read N- to C-terminus: Voltage-gated ClC-type chloride channel ClcB (417 aa).

The next 11 helical transmembrane spans lie at 5–25, 54–74, 146–166, 168–188, 190–210, 222–242, 258–278, 288–308, 316–336, 339–359, and 380–400; these read LLIA…FRHA, LITP…WQKM, LWIA…PLAG, LFIA…PVVI, AVVA…LYTV, AMII…MWLM, WQLA…PAVW, FLLS…KLLA, GAPG…GMLY, MWGF…LTGM, and MTGE…ASVL.

Belongs to the chloride channel (TC 2.A.49) family. ClcB subfamily.

The protein resides in the cell inner membrane. Probably acts as an electrical shunt for an outwardly-directed proton pump that is linked to amino acid decarboxylation, as part of the extreme acid resistance (XAR) response. The protein is Voltage-gated ClC-type chloride channel ClcB of Citrobacter koseri (strain ATCC BAA-895 / CDC 4225-83 / SGSC4696).